Consider the following 256-residue polypeptide: Aspirochlorine biosynthesis protein F (256 aa).

N19 is a glycosylation site (N-linked (GlcNAc...) asparagine). Helical transmembrane passes span 21-41, 163-183, and 214-234; these read SITPHLLLVGAQILFLSGPHF, LVWVLLMTDLVSQMMLRFFFT, and FGLGPYFFINMQYLVVSILAV.

The protein localises to the membrane. The protein operates within mycotoxin biosynthesis. Functionally, part of the gene cluster that mediates the biosynthesis of aspirochlorine (or antibiotic A30641), an unusual halogenated spiro compound with distinctive antifungal properties due to selective inhibition of protein biosynthesis, and which is also active against bacteria, viruses, and murine tumor cells. The non-ribosomal peptide synthetase (NRPS) aclP is responsible the formation of the diketopiperazine (DKP) core from the condensation of 2 phenylalanine residues. One Phe residue is tailored into chlorotyrosine by hydroxylation and chlorination, whereas the second Phe undergoes an unprecedented C-C bond cleavage to be converted into glycine. After formation of the DKP, sulfur is incorporated into the DKP by conjugation with glutathione by aclG, followed by its stepwise degradation to the thiol by aclI, aclJ and aclK, and the dithiol oxidation by aclT. In addition, oxygenases (aclB, aclC, aclL and aclO) and O-methyltransferases (aclM and aclU) act as tailoring enzymes to produce the intermediate dechloroaspirochlorine. Ultimately, chlorination of dechloroaspirochlorine by the halogenase aclH is the last step in the aspirochlorine pathway. In Aspergillus oryzae (strain ATCC 42149 / RIB 40) (Yellow koji mold), this protein is Aspirochlorine biosynthesis protein F.